The primary structure comprises 128 residues: Ribonuclease P protein component (128 aa).

It belongs to the RnpA family. In terms of assembly, consists of a catalytic RNA component (M1 or rnpB) and a protein subunit.

It catalyses the reaction Endonucleolytic cleavage of RNA, removing 5'-extranucleotides from tRNA precursor.. RNaseP catalyzes the removal of the 5'-leader sequence from pre-tRNA to produce the mature 5'-terminus. It can also cleave other RNA substrates such as 4.5S RNA. The protein component plays an auxiliary but essential role in vivo by binding to the 5'-leader sequence and broadening the substrate specificity of the ribozyme. The protein is Ribonuclease P protein component of Rhizobium meliloti (strain 1021) (Ensifer meliloti).